A 192-amino-acid chain; its full sequence is uncharacterized protein (192 aa).

Its subcellular location is the virion. This is an uncharacterized protein from Acanthamoeba polyphaga mimivirus (APMV).